A 134-amino-acid chain; its full sequence is Auxin-responsive protein SAUR40 (134 aa).

Belongs to the ARG7 family. As to quaternary structure, interacts with and inhibits PP2C-D subfamily of type 2C phosphatases such as PP2C67/PP2C-D1.

Its subcellular location is the cytoplasm. Provide a mechanistic link between auxin and plasma membrane H(+)-ATPases (PM H(+)-ATPases, e.g. AHA1 and AHA2), and triggers PM H(+)-ATPases activity by promoting phosphorylation of their C-terminal autoinhibitory domain as a result of PP2C-D subfamily of type 2C phosphatases inhibition, thus leading to the acidification of the apoplast and the facilitation of solutes and water uptake to drive cell expansion. Plays a role in the regulation of cell expansion, root meristem patterning and auxin transport. This is Auxin-responsive protein SAUR40 from Arabidopsis thaliana (Mouse-ear cress).